The primary structure comprises 257 residues: Imidazole glycerol phosphate synthase subunit HisF (257 aa).

Residues aspartate 11 and aspartate 130 contribute to the active site.

It belongs to the HisA/HisF family. As to quaternary structure, heterodimer of HisH and HisF.

Its subcellular location is the cytoplasm. The enzyme catalyses 5-[(5-phospho-1-deoxy-D-ribulos-1-ylimino)methylamino]-1-(5-phospho-beta-D-ribosyl)imidazole-4-carboxamide + L-glutamine = D-erythro-1-(imidazol-4-yl)glycerol 3-phosphate + 5-amino-1-(5-phospho-beta-D-ribosyl)imidazole-4-carboxamide + L-glutamate + H(+). The protein operates within amino-acid biosynthesis; L-histidine biosynthesis; L-histidine from 5-phospho-alpha-D-ribose 1-diphosphate: step 5/9. Functionally, IGPS catalyzes the conversion of PRFAR and glutamine to IGP, AICAR and glutamate. The HisF subunit catalyzes the cyclization activity that produces IGP and AICAR from PRFAR using the ammonia provided by the HisH subunit. This Shewanella sp. (strain MR-7) protein is Imidazole glycerol phosphate synthase subunit HisF.